Here is a 448-residue protein sequence, read N- to C-terminus: Probable glycine dehydrogenase (decarboxylating) subunit 1 (448 aa).

It belongs to the GcvP family. N-terminal subunit subfamily. In terms of assembly, the glycine cleavage system is composed of four proteins: P, T, L and H. In this organism, the P 'protein' is a heterodimer of two subunits.

It catalyses the reaction N(6)-[(R)-lipoyl]-L-lysyl-[glycine-cleavage complex H protein] + glycine + H(+) = N(6)-[(R)-S(8)-aminomethyldihydrolipoyl]-L-lysyl-[glycine-cleavage complex H protein] + CO2. Its function is as follows. The glycine cleavage system catalyzes the degradation of glycine. The P protein binds the alpha-amino group of glycine through its pyridoxal phosphate cofactor; CO(2) is released and the remaining methylamine moiety is then transferred to the lipoamide cofactor of the H protein. The polypeptide is Probable glycine dehydrogenase (decarboxylating) subunit 1 (Caulobacter vibrioides (strain ATCC 19089 / CIP 103742 / CB 15) (Caulobacter crescentus)).